A 352-amino-acid chain; its full sequence is 4-hydroxy-2-oxovalerate aldolase (352 aa).

Residues 14 to 266 (VRMTDTSLRD…KTGIDFFDIA (253 aa)) form the Pyruvate carboxyltransferase domain. 22–23 (RD) is a binding site for substrate. Asp-23 serves as a coordination point for Mn(2+). The Proton acceptor role is filled by His-26. Residues Ser-176 and His-205 each contribute to the substrate site. The Mn(2+) site is built by His-205 and His-207. Residue Tyr-296 coordinates substrate.

It belongs to the 4-hydroxy-2-oxovalerate aldolase family.

The enzyme catalyses (S)-4-hydroxy-2-oxopentanoate = acetaldehyde + pyruvate. The chain is 4-hydroxy-2-oxovalerate aldolase from Mycolicibacterium gilvum (strain PYR-GCK) (Mycobacterium gilvum (strain PYR-GCK)).